The chain runs to 184 residues: DOMON domain-containing protein CBG21755 (184 aa).

The N-terminal stretch at 1 to 20 is a signal peptide; that stretch reads MIVPISLLFLFLSFVPFSYS. The DOMON domain occupies 28-145; that stretch reads EVASMSWMVK…CVNWIVVPGG (118 aa). The N-linked (GlcNAc...) asparagine glycan is linked to Asn49.

It localises to the secreted. This chain is DOMON domain-containing protein CBG21755, found in Caenorhabditis briggsae.